Consider the following 507-residue polypeptide: Cytochrome P450 monooxygenase cloA (507 aa).

The chain crosses the membrane as a helical span at residues 15–35 (WTWILLTTCIALISPLVLKGI). N-linked (GlcNAc...) asparagine glycosylation occurs at Asn247. Residue Cys450 coordinates heme.

This sequence belongs to the cytochrome P450 family. The cofactor is heme.

The protein localises to the membrane. The protein operates within alkaloid biosynthesis; ergot alkaloid biosynthesis. Cytochrome P450 monooxygenase; part of the gene cluster that mediates the biosynthesis of fungal ergot alkaloid. DmaW catalyzes the first step of ergot alkaloid biosynthesis by condensing dimethylallyl diphosphate (DMAP) and tryptophan to form 4-dimethylallyl-L-tryptophan. The second step is catalyzed by the methyltransferase easF that methylates 4-dimethylallyl-L-tryptophan in the presence of S-adenosyl-L-methionine, resulting in the formation of 4-dimethylallyl-L-abrine. The catalase easC and the FAD-dependent oxidoreductase easE then transform 4-dimethylallyl-L-abrine to chanoclavine-I which is further oxidized by easD in the presence of NAD(+), resulting in the formation of chanoclavine-I aldehyde. Agroclavine dehydrogenase easG then mediates the conversion of chanoclavine-I aldehyde to agroclavine via a non-enzymatic adduct reaction: the substrate is an iminium intermediate that is formed spontaneously from chanoclavine-I aldehyde in the presence of glutathione. The presence of easA is not required to complete this reaction. Further conversion of agroclavine to paspalic acid is a two-step process involving oxidation of agroclavine to elymoclavine and of elymoclavine to paspalic acid, the second step being performed by the elymoclavine oxidase cloA. Paspalic acid is then further converted to D-lysergic acid. Ergopeptines are assembled from D-lysergic acid and three different amino acids by the D-lysergyl-peptide-synthetases composed each of a monomudular and a trimodular nonribosomal peptide synthetase subunit. LpsB and lpsC encode the monomodular subunits responsible for D-lysergic acid activation and incorporation into the ergopeptine backbone. LpsA1 and A2 subunits encode the trimodular nonribosomal peptide synthetase assembling the tripeptide portion of ergopeptines. LpsA1 is responsible for formation of the major ergopeptine, ergotamine, and lpsA2 for alpha-ergocryptine, the minor ergopeptine of the total alkaloid mixture elaborated by C.purpurea. D-lysergyl-tripeptides are assembled by the nonribosomal peptide synthetases and released as N-(D-lysergyl-aminoacyl)-lactams. Cyclolization of the D-lysergyl-tripeptides is performed by the Fe(2+)/2-ketoglutarate-dependent dioxygenase easH which introduces a hydroxyl group into N-(D-lysergyl-aminoacyl)-lactam at alpha-C of the aminoacyl residue followed by spontaneous condensation with the terminal lactam carbonyl group. The protein is Cytochrome P450 monooxygenase cloA of Claviceps purpurea (strain 20.1) (Ergot fungus).